Here is a 212-residue protein sequence, read N- to C-terminus: Protein-L-isoaspartate O-methyltransferase (212 aa).

S60 is a catalytic residue.

Belongs to the methyltransferase superfamily. L-isoaspartyl/D-aspartyl protein methyltransferase family.

The protein localises to the cytoplasm. The catalysed reaction is [protein]-L-isoaspartate + S-adenosyl-L-methionine = [protein]-L-isoaspartate alpha-methyl ester + S-adenosyl-L-homocysteine. Catalyzes the methyl esterification of L-isoaspartyl residues in peptides and proteins that result from spontaneous decomposition of normal L-aspartyl and L-asparaginyl residues. It plays a role in the repair and/or degradation of damaged proteins. The chain is Protein-L-isoaspartate O-methyltransferase from Pseudomonas putida (strain W619).